The following is a 231-amino-acid chain: NADH-ubiquinone oxidoreductase chain 4 (231 aa).

Transmembrane regions (helical) follow at residues 1–21 (PIAG…YGII), 34–54 (MFLP…LTCL), 63–85 (IAYS…TPWG), 89–111 (AMAL…NTTY), 118–138 (ILIL…WWLL), and 169–189 (TIIL…HMFL).

Belongs to the complex I subunit 4 family.

The protein resides in the mitochondrion membrane. The enzyme catalyses a ubiquinone + NADH + 5 H(+)(in) = a ubiquinol + NAD(+) + 4 H(+)(out). Functionally, core subunit of the mitochondrial membrane respiratory chain NADH dehydrogenase (Complex I) that is believed to belong to the minimal assembly required for catalysis. Complex I functions in the transfer of electrons from NADH to the respiratory chain. The immediate electron acceptor for the enzyme is believed to be ubiquinone. This is NADH-ubiquinone oxidoreductase chain 4 (MT-ND4) from Trimeresurus cantori (Cantor's pit viper).